Here is an 805-residue protein sequence, read N- to C-terminus: Putative cation-transporting ATPase MJ1226 (805 aa).

Helical transmembrane passes span 53–73, 75–95, 226–246, and 258–278; these read SYFWNPIAWMIEIAAILSAII, HWVDFVIILILLLVNGVVGFW, IGDYLIVLAVILIAIMVAVEL, and FALVLAVSAIPAAMPAVLSIT. Aspartate 311 serves as the catalytic 4-aspartylphosphate intermediate. 6 helical membrane-spanning segments follow: residues 615–637, 641–663, 680–700, 712–734, 747–769, and 773–790; these read YVIYRITETIRILFFVELCILIL, PITALMIVLLAILNDIPILAIAY, ILMLSTALGLSGVVSSFLIFY, ELQSFVFLKLILAGHATIFVTRI, LLFWGVMGTNIIGTIVAAEGIFM, and GWDLALFMWLYAHVWMLI.

This sequence belongs to the cation transport ATPase (P-type) (TC 3.A.3) family. Type IIIA subfamily.

It localises to the cell membrane. It catalyses the reaction ATP + H2O = ADP + phosphate + H(+). The chain is Putative cation-transporting ATPase MJ1226 from Methanocaldococcus jannaschii (strain ATCC 43067 / DSM 2661 / JAL-1 / JCM 10045 / NBRC 100440) (Methanococcus jannaschii).